The chain runs to 540 residues: MLO protein homolog 1 (540 aa).

Residues 1–16 (MAGGRSGSRELPETPT) lie on the Extracellular side of the membrane. Residues 17–37 (WAVAVVCAVLVLVSAAMEHGL) traverse the membrane as a helical segment. At 38–60 (HNLSHWFRRRQKKAMGDALDKIK) the chain is on the cytoplasmic side. The helical transmembrane segment at 61 to 81 (AELMLLGFISLLLTVAQAPIS) threads the bilayer. At 82-142 (KICIPKSAAN…MSAKSMHQLH (61 aa)) the chain is on the extracellular side. Residues 143 to 163 (IFIFVLAVFHVTYCIITMGLG) form a helical membrane-spanning segment. Topologically, residues 164-265 (RLKMKKWKKW…IKRSLEDDFK (102 aa)) are cytoplasmic. A helical transmembrane segment spans residues 266–286 (VVVGISLPLWFVGILVLFLDI). Position 287 (histidine 287) is a topological domain, extracellular. A helical membrane pass occupies residues 288–308 (GLGTLIWISFVPLIIVLLVGT). Residues 309 to 347 (KLEMVIMEMAQEIQDRATVIQGAPMVEPSNKYFWFNRPD) lie on the Cytoplasmic side of the membrane. A helical membrane pass occupies residues 348–368 (WVLFFIHLTLFHNAFQMAHFV). At 369–383 (WTMATPGLKKCFHEN) the chain is on the extracellular side. Residues 384-404 (IWLSIVEVIVGISLQVLCSYI) form a helical membrane-spanning segment. Over 405–540 (TFPLYALVTQ…DSDFSFSAQR (136 aa)) the chain is Cytoplasmic. The tract at residues 426-447 (EQTMKALMNWRKKAMEKKKVRD) is calmodulin-binding. The disordered stretch occupies residues 468-526 (ASPVHLLQDHRARSDDPPSPITVASPPAPEEDMYPVPAAAASRQLLDDPPDRRWMASSS). Basic and acidic residues-rich tracts occupy residues 474–483 (LQDHRARSDD) and 512–521 (LLDDPPDRRW).

This sequence belongs to the MLO family.

Its subcellular location is the membrane. Its function is as follows. May be involved in modulation of pathogen defense and leaf cell death. Activity seems to be regulated by Ca(2+)-dependent calmodulin binding and seems not to require heterotrimeric G proteins. The polypeptide is MLO protein homolog 1 (MLO1) (Oryza sativa subsp. indica (Rice)).